The sequence spans 462 residues: NEDD8-activating enzyme E1 catalytic subunit (462 aa).

An N-acetylalanine modification is found at alanine 2. Residues 53 to 70 are interaction with UBE2M N-terminus; sequence HPDFEPSTESLQFLLDTC. Residues 100–124 and 148–171 each bind ATP; these read DMDT…GRPK and IQDF…SIIA. Interaction with UBE2M N-terminus stretches follow at residues 157-161 and 192-217; these read RQFHI and PSSI…LPGM. Residues 227–229 form an interaction with NEDD8 region; it reads LYP. Cysteine 237 acts as the Glycyl thioester intermediate in catalysis. Interaction with NAE1 stretches follow at residues 242–248 and 292–295; these read MPRLPEH and YNIR. Residues 331-338 form an interaction with UBE2M N-terminus region; that stretch reads IATSAYIP. The interaction with NEDD8 stretch occupies residues 352–357; the sequence is YTYTFE. The interval 368 to 462 is interaction with UBE2M core domain; the sequence is SQLPQNIQFS…QTVLFKLHFT (95 aa).

The protein belongs to the ubiquitin-activating E1 family. UBA3 subfamily. As to quaternary structure, heterodimer of UBA3 and NAE1. Interacts with NEDD8, UBE2F and UBE2M. Binds ESR1 and ESR2 with bound steroid ligand. Interacts with TBATA. In terms of tissue distribution, ubiquitously expressed.

It carries out the reaction ATP + [NEDD8 protein] + [E1 NEDD8-activating enzyme]-L-cysteine = AMP + diphosphate + [E1 NEDD8-activating enzyme]-S-[NEDD8 protein]-yl-L-cysteine.. Its pathway is protein modification; protein neddylation. Its activity is regulated as follows. Binding of TP53BP2 to the regulatory subunit NAE1 decreases activity. Its function is as follows. Catalytic subunit of the dimeric UBA3-NAE1 E1 enzyme. E1 activates NEDD8 by first adenylating its C-terminal glycine residue with ATP, thereafter linking this residue to the side chain of the catalytic cysteine, yielding a NEDD8-UBA3 thioester and free AMP. E1 finally transfers NEDD8 to the catalytic cysteine of UBE2M. Down-regulates steroid receptor activity. Necessary for cell cycle progression. In Rattus norvegicus (Rat), this protein is NEDD8-activating enzyme E1 catalytic subunit (Uba3).